Reading from the N-terminus, the 315-residue chain is MPKKEIIILCGPTASGKSYLGHALAKACDGEIINIDSMQVYKEIPIITASPPESYKSEIPYHLYNFLPITEDFSVVKYLKLAAEKINQVTASGKLPILIGGTGLYINSLVFGYNNIPDISEDLRQQVRKLHNEIGNTELHNRLTKLDPLASSKINQSDTQRLIRAYEVVLQTGKSIFSFQTLPKEQILSEFNFKIIFLNPERKFLYKICDERLANIFKDGAIDEIALIKKQFNPDYLNLKAVGIKEILAYLENKLTLSEALNLAQTRTRRYAKRQITWFKHQIKEKITLDYSNEEDFLQVTRKLSILIDLPNSNK.

ATP is bound at residue 11–18 (GPTASGKS). 13-18 (TASGKS) contributes to the substrate binding site. Interaction with substrate tRNA regions lie at residues 36–39 (DSMQ) and 160–164 (QRLIR).

Belongs to the IPP transferase family. As to quaternary structure, monomer. The cofactor is Mg(2+).

It carries out the reaction adenosine(37) in tRNA + dimethylallyl diphosphate = N(6)-dimethylallyladenosine(37) in tRNA + diphosphate. Functionally, catalyzes the transfer of a dimethylallyl group onto the adenine at position 37 in tRNAs that read codons beginning with uridine, leading to the formation of N6-(dimethylallyl)adenosine (i(6)A). The chain is tRNA dimethylallyltransferase from Rickettsia bellii (strain RML369-C).